The primary structure comprises 215 residues: Nucleoside triphosphate pyrophosphatase (215 aa).

Catalysis depends on D77, which acts as the Proton acceptor.

It belongs to the Maf family. Requires a divalent metal cation as cofactor.

It is found in the cytoplasm. It catalyses the reaction a ribonucleoside 5'-triphosphate + H2O = a ribonucleoside 5'-phosphate + diphosphate + H(+). The enzyme catalyses a 2'-deoxyribonucleoside 5'-triphosphate + H2O = a 2'-deoxyribonucleoside 5'-phosphate + diphosphate + H(+). Its function is as follows. Nucleoside triphosphate pyrophosphatase. May have a dual role in cell division arrest and in preventing the incorporation of modified nucleotides into cellular nucleic acids. This Rickettsia africae (strain ESF-5) protein is Nucleoside triphosphate pyrophosphatase.